Reading from the N-terminus, the 1135-residue chain is Envelopment polyprotein (1135 aa).

Residues 1-18 form the signal peptide; the sequence is MIMWGLLLTMILIDFGAS. Over 19 to 495 the chain is Lumenal; it reads LRNVYDMKIE…ALLTTFCFGW (477 aa). 11 disulfide bridges follow: Cys-29–Cys-151, Cys-63–Cys-157, Cys-109–Cys-128, Cys-133–Cys-138, Cys-175–Cys-185, Cys-210–Cys-247, Cys-234–Cys-351, Cys-376–Cys-435, Cys-380–Cys-389, Cys-405–Cys-424, and Cys-452–Cys-475. Asn-134 carries an N-linked (GlcNAc...) asparagine; by host glycan. N-linked (GlcNAc...) asparagine; by host glycosylation is found at Asn-235 and Asn-347. N-linked (GlcNAc...) asparagine; by host glycosylation is present at Asn-399. Residues 496–516 traverse the membrane as a helical segment; it reads ILILSITLAVLVVLKFFAAIL. Residues 516-533 are binding to the ribonucleoprotein; it reads LHNSSQENRFKIILRKIK. Over 517 to 627 the chain is Cytoplasmic; sequence HNSSQENRFK…LNLFRYKSRC (111 aa). CCHC-type zinc fingers lie at residues 545–565 and 570–591; these read CEVC…NLSC and CPYC…YKVC. Binding to the ribonucleoprotein regions lie at residues 588–605, 592–603, and 611–625; these read YKVC…KKTI, QATHRFRDDLKK, and SPGC…RYKS. In terms of domain architecture, ITAM spans 611 to 634; that stretch reads SPGCYRTLNLFRYKSRCYIFTVWV. Phosphotyrosine occurs at positions 615 and 628. Residues 615–618 carry the YxxL motif; sequence YRTL. The helical transmembrane segment at 628-648 threads the bilayer; it reads YIFTVWVTLLIIESIMWAASA. Residues 649–1105 are Lumenal-facing; sequence SETVLEPSWN…EWITGIFNGN (457 aa). Intrachain disulfides connect Cys-735–Cys-770, Cys-739–Cys-777, Cys-751–Cys-885, Cys-765–Cys-896, Cys-780–Cys-904, Cys-806–Cys-815, Cys-823–Cys-832, and Cys-863–Cys-867. The fusion loop stretch occupies residues 757–777; sequence FEYENNWGCNPADCPGIGTGC. Residue Asn-928 is glycosylated (N-linked (GlcNAc...) asparagine; by host). 5 disulfides stabilise this stretch: Cys-970–Cys-1000, Cys-993–Cys-1045, Cys-1010–Cys-1015, Cys-1046–Cys-1051, and Cys-1085–Cys-1089. Residues 1106-1126 traverse the membrane as a helical segment; sequence WIVIVVLVFFFILSLILLSLL. A binding to the ribonucleoprotein region spans residues 1122–1135; the sequence is LLSLLCPIRKHKRS. The Cytoplasmic portion of the chain corresponds to 1127 to 1135; sequence CPIRKHKRS.

Belongs to the hantavirus envelope glycoprotein family. Homodimer. Homotetramer; forms heterotetrameric Gn-Gc spikes in the pre-fusion conformation. Interacts (via C-terminus) with the nucleoprotein. Interacts with host TUFM; this interaction contributes to the virus-induced degradation of mitochondria by autophagy, which leads to degradation of host MAVS and inhibition of type I interferon (IFN) responses. Interacts with host MAP1LC3B; this interaction contributes to the virus-induced degradation of mitochondria by autophagy, which leads to degradation of host MAVS and inhibition of type I interferon (IFN) responses. In terms of assembly, homodimer. Homotetramer; forms heterotetrameric Gn-Gc spikes in the pre-fusion conformation. Homotrimer; forms homotrimer in the post-fusion conformation at acidic pH. Interacts (via C-terminus) with the nucleoprotein. Envelope polyprotein precursor is quickly cleaved in vivo just after synthesis, presumably by host signal peptidase.

It localises to the virion membrane. It is found in the host cell surface. Its subcellular location is the host Golgi apparatus membrane. The protein resides in the host endoplasmic reticulum membrane. The protein localises to the host mitochondrion. Functionally, forms homotetramers with glycoprotein C at the surface of the virion. Attaches the virion to host cell receptors including integrin ITGAV/ITGB3. This attachment induces virion internalization predominantly through clathrin-dependent endocytosis. Mediates the assembly and budding of infectious virus particles through its interaction with the nucleocapsid protein and the viral genome. May dysregulate normal immune and endothelial cell responses through an ITAM motif. Translocates to mitochondria, binds to host TUFM and recruits MAP1LC3B. These interactions induce mitochondrial autophagy and therefore destruction of host MAVS leading to inhibition of type I interferon (IFN) responses. Concomitant breakdown of glycoprotein N is apparently prevented by the nucleoprotein that may inhibit Gn-stimulated autophagosome-lysosome fusion. Interacts with the viral genomic RNA. Its function is as follows. Forms homotetramers with glycoprotein N at the surface of the virion. Attaches the virion to host cell receptors including integrin ITGAV/ITGB3. This attachment induces virion internalization predominantly through clathrin-dependent endocytosis. Class II fusion protein that promotes fusion of viral membrane with host endosomal membrane after endocytosis of the virion. The polypeptide is Envelopment polyprotein (GP) (Dobrava-Belgrade orthohantavirus (DOBV)).